The following is a 917-amino-acid chain: MAYHGRGDGYDGHQLQDLPGGHNQGDQHDDAQAPFLSENPMPYDNDRLGTDTPPVRPVSAYSLTESYAPGAGTTRAGVAVNPTPPPHGGYGGGGVSSGVDQGYNYGGDYATDPAYRMSAIDEDDSWLRRQQPNAAPTGGLKRYATRKVKLVQGSVLSLDYPVPSAIRNAVQPKYRDEEGNNEEFFKMRYTAATCDPNDFTLKNGYDLRPRMYNRHTELLIAITYYNEDKVLLSRTLHSVMTNIRDIVNLKKSSFWNRGGPAWQKIVVCLVFDGLDKTDKNVLDVLATIGVYQDGVIKKDVDGKETVAHIFEYTSQLSVTPNQALIRPVDDGPQTLPPVQFIFCLKQKNTKKINSHRWLFNAFGRILNPEVCILLDAGTKPSPRSLLALWEGFYNDKDLGGACGEIHAMLGKGGKKLLNPLVAVQNFEYKISNILDKPLESAFGYVSVLPGAFSAYRFRAIMGRPLEQYFHGDHTLSKLLGKKGIEGMNIFKKNMFLAEDRILCFELVAKAGQKWHLSYIKAAKGETDVPEGAPEFISQRRRWLNGSFAASLYSLMHFGRMYKSGHNIVRMFFFHVQLIYNIANVIFTWFSLASYWLTTTVIMDLVGTPVTASSSSAEHHGWPFGDTVTPFFNAVLKYIYLAFVILQFILALGNRPKGSKWTYITSFFVFSLIQSYILVLSGYLVARAFSVPLDQQLQLDNAKDAMASLFGGSGSAGVILVALVTIYGLYFLASFMYLDPWHMFHSFPYYMLLMSTYINILMIYAFNNWHDVSWGTKGSDKAEALPSANVSKGEKDEAVVEEIEKPQEDIDQQFEATVRRALAPYKEDETPEPKDLEDSYKSFRTMLVVSWLFSNCLLAVVITSDNFNTFGIGQTASARTAWFFKFLLFATGALSVIRFIGFCWFLGRTGIMCCFARR.

Positions 1 to 11 are enriched in basic and acidic residues; that stretch reads MAYHGRGDGYD. The segment at 1 to 56 is disordered; that stretch reads MAYHGRGDGYDGHQLQDLPGGHNQGDQHDDAQAPFLSENPMPYDNDRLGTDTPPVR. The Extracellular portion of the chain corresponds to 1–570; the sequence is MAYHGRGDGY…YKSGHNIVRM (570 aa). The N-linked (GlcNAc...) asparagine glycan is linked to Asn544. The helical transmembrane segment at 571–591 threads the bilayer; that stretch reads FFFHVQLIYNIANVIFTWFSL. Residues 592–629 lie on the Cytoplasmic side of the membrane; sequence ASYWLTTTVIMDLVGTPVTASSSSAEHHGWPFGDTVTP. The chain crosses the membrane as a helical span at residues 630 to 650; sequence FFNAVLKYIYLAFVILQFILA. Residues 651-664 lie on the Extracellular side of the membrane; that stretch reads LGNRPKGSKWTYIT. A helical membrane pass occupies residues 665-685; the sequence is SFFVFSLIQSYILVLSGYLVA. Over 686–716 the chain is Cytoplasmic; sequence RAFSVPLDQQLQLDNAKDAMASLFGGSGSAG. Residues 717 to 737 form a helical membrane-spanning segment; sequence VILVALVTIYGLYFLASFMYL. Topologically, residues 738–744 are extracellular; the sequence is DPWHMFH. A helical transmembrane segment spans residues 745–765; that stretch reads SFPYYMLLMSTYINILMIYAF. The Cytoplasmic segment spans residues 766-843; that stretch reads NNWHDVSWGT…DLEDSYKSFR (78 aa). Residues 844–864 traverse the membrane as a helical segment; that stretch reads TMLVVSWLFSNCLLAVVITSD. Residues 865 to 884 lie on the Extracellular side of the membrane; the sequence is NFNTFGIGQTASARTAWFFK. A helical membrane pass occupies residues 885-905; it reads FLLFATGALSVIRFIGFCWFL. Residues 906 to 917 are Cytoplasmic-facing; that stretch reads GRTGIMCCFARR.

The protein belongs to the chitin synthase family. Class III subfamily.

It is found in the cell membrane. It catalyses the reaction [(1-&gt;4)-N-acetyl-beta-D-glucosaminyl](n) + UDP-N-acetyl-alpha-D-glucosamine = [(1-&gt;4)-N-acetyl-beta-D-glucosaminyl](n+1) + UDP + H(+). In terms of biological role, polymerizes chitin, a structural polymer of the cell wall and septum, by transferring the sugar moiety of UDP-GlcNAc to the non-reducing end of the growing chitin polymer. This Neurospora crassa (strain ATCC 24698 / 74-OR23-1A / CBS 708.71 / DSM 1257 / FGSC 987) protein is Chitin synthase 1 (chs-1).